Here is a 536-residue protein sequence, read N- to C-terminus: 2,3-bisphosphoglycerate-independent phosphoglycerate mutase (536 aa).

Positions 19 and 69 each coordinate Mn(2+). Ser-69 acts as the Phosphoserine intermediate in catalysis. Residues His-130, 160 to 161 (RD), Arg-192, Arg-198, 262 to 265 (RPDR), and Lys-335 contribute to the substrate site. Positions 402, 406, 443, 444, and 461 each coordinate Mn(2+).

This sequence belongs to the BPG-independent phosphoglycerate mutase family. In terms of assembly, monomer. Mn(2+) is required as a cofactor.

It carries out the reaction (2R)-2-phosphoglycerate = (2R)-3-phosphoglycerate. Its pathway is carbohydrate degradation; glycolysis; pyruvate from D-glyceraldehyde 3-phosphate: step 3/5. Its function is as follows. Catalyzes the interconversion of 2-phosphoglycerate and 3-phosphoglycerate. In Gloeobacter violaceus (strain ATCC 29082 / PCC 7421), this protein is 2,3-bisphosphoglycerate-independent phosphoglycerate mutase.